Here is a 244-residue protein sequence, read N- to C-terminus: Ureidoacrylate amidohydrolase RutB (244 aa).

D38 serves as the catalytic Proton acceptor. K147 is an active-site residue. C180 functions as the Nucleophile in the catalytic mechanism.

It belongs to the isochorismatase family. RutB subfamily.

The catalysed reaction is (Z)-3-ureidoacrylate + H2O + H(+) = (Z)-3-aminoacrylate + NH4(+) + CO2. The enzyme catalyses (Z)-3-ureidoacrylate + H2O = (Z)-3-aminoacrylate + carbamate + H(+). It carries out the reaction (Z)-2-methylureidoacrylate + H2O + H(+) = (Z)-2-methylaminoacrylate + NH4(+) + CO2. Functionally, hydrolyzes ureidoacrylate to form aminoacrylate and carbamate. The carbamate hydrolyzes spontaneously, thereby releasing one of the nitrogen atoms of the pyrimidine ring as ammonia and one of its carbon atoms as CO2. This Escherichia coli O6:H1 (strain CFT073 / ATCC 700928 / UPEC) protein is Ureidoacrylate amidohydrolase RutB.